The chain runs to 550 residues: Dihydroxy-acid dehydratase (550 aa).

Asp-78 contributes to the Mg(2+) binding site. Cys-119 lines the [2Fe-2S] cluster pocket. The Mg(2+) site is built by Asp-120 and Lys-121. N6-carboxylysine is present on Lys-121. Cys-191 serves as a coordination point for [2Fe-2S] cluster. Residue Glu-440 participates in Mg(2+) binding. Residue Ser-466 is the Proton acceptor of the active site.

The protein belongs to the IlvD/Edd family. In terms of assembly, homodimer. It depends on [2Fe-2S] cluster as a cofactor. Mg(2+) serves as cofactor.

The enzyme catalyses (2R)-2,3-dihydroxy-3-methylbutanoate = 3-methyl-2-oxobutanoate + H2O. The catalysed reaction is (2R,3R)-2,3-dihydroxy-3-methylpentanoate = (S)-3-methyl-2-oxopentanoate + H2O. The protein operates within amino-acid biosynthesis; L-isoleucine biosynthesis; L-isoleucine from 2-oxobutanoate: step 3/4. It participates in amino-acid biosynthesis; L-valine biosynthesis; L-valine from pyruvate: step 3/4. Functionally, functions in the biosynthesis of branched-chain amino acids. Catalyzes the dehydration of (2R,3R)-2,3-dihydroxy-3-methylpentanoate (2,3-dihydroxy-3-methylvalerate) into 2-oxo-3-methylpentanoate (2-oxo-3-methylvalerate) and of (2R)-2,3-dihydroxy-3-methylbutanoate (2,3-dihydroxyisovalerate) into 2-oxo-3-methylbutanoate (2-oxoisovalerate), the penultimate precursor to L-isoleucine and L-valine, respectively. This chain is Dihydroxy-acid dehydratase, found in Methanococcus maripaludis (strain C6 / ATCC BAA-1332).